The sequence spans 443 residues: Phosphoglucosamine mutase (443 aa).

The Phosphoserine intermediate role is filled by serine 100. Mg(2+) is bound by residues serine 100, aspartate 239, aspartate 241, and aspartate 243. Phosphoserine is present on serine 100.

Belongs to the phosphohexose mutase family. Mg(2+) serves as cofactor. Activated by phosphorylation.

It carries out the reaction alpha-D-glucosamine 1-phosphate = D-glucosamine 6-phosphate. In terms of biological role, catalyzes the conversion of glucosamine-6-phosphate to glucosamine-1-phosphate. The chain is Phosphoglucosamine mutase from Shewanella loihica (strain ATCC BAA-1088 / PV-4).